The primary structure comprises 486 residues: Ribulose bisphosphate carboxylase large chain (486 aa).

Positions 126 and 176 each coordinate substrate. The Proton acceptor role is filled by Lys178. Lys180 lines the substrate pocket. Mg(2+)-binding residues include Lys204, Asp206, and Glu207. The residue at position 204 (Lys204) is an N6-carboxylysine. His296 functions as the Proton acceptor in the catalytic mechanism. The substrate site is built by Arg297, His329, and Ser381.

It belongs to the RuBisCO large chain family. Type I subfamily. As to quaternary structure, heterohexadecamer of 8 large chains and 8 small chains. Mg(2+) serves as cofactor.

It catalyses the reaction 2 (2R)-3-phosphoglycerate + 2 H(+) = D-ribulose 1,5-bisphosphate + CO2 + H2O. The catalysed reaction is D-ribulose 1,5-bisphosphate + O2 = 2-phosphoglycolate + (2R)-3-phosphoglycerate + 2 H(+). Functionally, ruBisCO catalyzes two reactions: the carboxylation of D-ribulose 1,5-bisphosphate, the primary event in carbon dioxide fixation, as well as the oxidative fragmentation of the pentose substrate. Both reactions occur simultaneously and in competition at the same active site. This chain is Ribulose bisphosphate carboxylase large chain, found in Cupriavidus taiwanensis (strain DSM 17343 / BCRC 17206 / CCUG 44338 / CIP 107171 / LMG 19424 / R1) (Ralstonia taiwanensis (strain LMG 19424)).